Consider the following 446-residue polypeptide: Na(+)-translocating NADH-quinone reductase subunit A (446 aa).

It belongs to the NqrA family. As to quaternary structure, composed of six subunits; NqrA, NqrB, NqrC, NqrD, NqrE and NqrF.

The catalysed reaction is a ubiquinone + n Na(+)(in) + NADH + H(+) = a ubiquinol + n Na(+)(out) + NAD(+). NQR complex catalyzes the reduction of ubiquinone-1 to ubiquinol by two successive reactions, coupled with the transport of Na(+) ions from the cytoplasm to the periplasm. NqrA to NqrE are probably involved in the second step, the conversion of ubisemiquinone to ubiquinol. This is Na(+)-translocating NADH-quinone reductase subunit A from Vibrio parahaemolyticus serotype O3:K6 (strain RIMD 2210633).